Here is a 401-residue protein sequence, read N- to C-terminus: Nicotinamide/nicotinic acid mononucleotide adenylyltransferase 1 (401 aa).

Disordered stretches follow at residues methionine 1 to lysine 30 and alanine 48 to glutamine 123. A compositionally biased stretch (basic residues) spans isoleucine 52–arginine 69. 4 positions are modified to phosphoserine: serine 91, serine 95, serine 96, and serine 111. NAD(+)-binding residues include serine 173 and phenylalanine 174. ATP is bound at residue histidine 181. Residues threonine 253, glycine 288, aspartate 290, tryptophan 301, arginine 320, and asparagine 351 each coordinate NAD(+). Threonine 356–arginine 359 serves as a coordination point for ATP.

Belongs to the eukaryotic NMN adenylyltransferase family. As to quaternary structure, homotetramer. Ni(2+) is required as a cofactor.

Its subcellular location is the cytoplasm. The protein localises to the nucleus. It carries out the reaction beta-nicotinamide D-ribonucleotide + ATP + H(+) = diphosphate + NAD(+). The enzyme catalyses nicotinate beta-D-ribonucleotide + ATP + H(+) = deamido-NAD(+) + diphosphate. The protein operates within cofactor biosynthesis; NAD(+) biosynthesis; deamido-NAD(+) from nicotinate D-ribonucleotide: step 1/1. Its pathway is cofactor biosynthesis; NAD(+) biosynthesis; NAD(+) from nicotinamide D-ribonucleotide: step 1/1. In terms of biological role, catalyzes the formation of NAD(+) from nicotinamide mononucleotide (NMN) and ATP. Can also use the deamidated form; nicotinic acid mononucleotide (NaMN) as substrate to form deamido-NAD(+) (NaAD). Key enzyme in both de novo and salvage pathways for NAD(+) biosynthesis. Predominantly acts in the salvage pathways via NMN. The chain is Nicotinamide/nicotinic acid mononucleotide adenylyltransferase 1 from Saccharomyces cerevisiae (strain ATCC 204508 / S288c) (Baker's yeast).